The chain runs to 583 residues: Bifunctional lycopene cyclase/phytoene synthase (583 aa).

Positions 1–243 (MGFDYALVHL…IVFGQLAFDN (243 aa)) are lycopene beta-cyclase. A run of 7 helical transmembrane segments spans residues 3–23 (FDYALVHLKYTIPPAVLLTWL), 35–55 (KVGYLVSIAVASTIPWDSYLI), 75–97 (IPLEEVFFFIIQTYNTSLLYLLL), 120–140 (YMRLAGQVFFLALIAWGWRCI), 151–171 (LILVWAGPFLLMLWSLAYQFI), 173–193 (ALPVTNTALPIFLPTLYLWVV), and 221–241 (IEEALFFLATNALIVFGQLAF). Positions 250 to 583 (TFPHLFTGPS…MVAWRTLNSK (334 aa)) are phytoene synthase.

This sequence in the N-terminal section; belongs to the lycopene beta-cyclase family. In the C-terminal section; belongs to the phytoene/squalene synthase family.

It is found in the membrane. It carries out the reaction all-trans-lycopene = gamma-carotene. The enzyme catalyses gamma-carotene = all-trans-beta-carotene. It catalyses the reaction 2 (2E,6E,10E)-geranylgeranyl diphosphate = 15-cis-phytoene + 2 diphosphate. It participates in carotenoid biosynthesis; beta-carotene biosynthesis. The protein operates within carotenoid biosynthesis; phytoene biosynthesis; all-trans-phytoene from geranylgeranyl diphosphate: step 1/1. Functionally, bifunctional enzyme that catalyzes the reactions from geranylgeranyl diphosphate to phytoene (phytoene synthase) and lycopene to beta-carotene via the intermediate gamma-carotene (lycopene cyclase). The polypeptide is Bifunctional lycopene cyclase/phytoene synthase (Pyrenophora tritici-repentis (strain Pt-1C-BFP) (Wheat tan spot fungus)).